Reading from the N-terminus, the 389-residue chain is Large envelope protein (389 aa).

The residue at position 1 (methionine 1) is an N-acetylmethionine. A lipid anchor (N-myristoyl glycine; by host) is attached at glycine 2. Residues 2 to 108 are pre-S1; sequence GQNLSTSNPL…PPLRDAHPQA (107 aa). Residues 2-163 are pre-S; it reads GQNLSTSNPL…FSKIGDLAPN (162 aa). The Virion surface; in external conformation portion of the chain corresponds to 2–170; that stretch reads GQNLSTSNPL…APNMENITSG (169 aa). The Intravirion; in internal conformation segment spans residues 2–242; that stretch reads GQNLSTSNPL…PGYRWMCLRR (241 aa). The disordered stretch occupies residues 76–103; sequence TLPANPPPAATNRQSGRQPTPLSPPLRD. Residues 86-95 are compositionally biased toward polar residues; the sequence is TNRQSGRQPT. Positions 109–163 are pre-S2; that stretch reads MQWTSTTFHQALQDPRVRGLYFPAGGSSSGTVNPVPTTASPILSIFSKIGDLAPN. The helical transmembrane segment at 171–191 threads the bilayer; it reads FLGPLLVLQAGFFLLTRILTI. The Intravirion; in external conformation segment spans residues 192–242; it reads PQSLDSWWTSLNFLGGTTVCLGQNSQSPTSNHSPTSCPPTCPGYRWMCLRR. The chain crosses the membrane as a helical span at residues 243–263; that stretch reads FIIFLFILLLCLIFLLVLLDY. The Virion surface segment spans residues 264–337; it reads QGMLPVCPLI…WASARFSWLS (74 aa). Residue asparagine 309 is glycosylated (N-linked (GlcNAc...) asparagine; by host). A helical membrane pass occupies residues 338–358; the sequence is LLVPFVQWFAGLSPIVWLSVI. Residues 359-364 are Intravirion-facing; that stretch reads WMMWYW. A helical transmembrane segment spans residues 365–387; the sequence is GPSLYSILSPFLPLLPIFFCLWA. Residues 388 to 389 are Virion surface-facing; the sequence is YI.

The protein belongs to the orthohepadnavirus major surface antigen family. In terms of assembly, in its internal form (Li-HBsAg), interacts with the capsid protein and with the isoform S. Interacts with host chaperone CANX. As to quaternary structure, associates with host chaperone CANX through its pre-S2 N glycan; this association may be essential for isoform M proper secretion. Interacts with isoform L. Interacts with the antigens of satellite virus HDV (HDVAgs); this interaction is required for encapsidation of HDV genomic RNA. In terms of processing, isoform M is N-terminally acetylated by host at a ratio of 90%, and N-glycosylated by host at the pre-S2 region. Post-translationally, myristoylated.

It localises to the virion membrane. Functionally, the large envelope protein exists in two topological conformations, one which is termed 'external' or Le-HBsAg and the other 'internal' or Li-HBsAg. In its external conformation the protein attaches the virus to cell receptors and thereby initiating infection. This interaction determines the species specificity and liver tropism. This attachment induces virion internalization predominantly through caveolin-mediated endocytosis. The large envelope protein also assures fusion between virion membrane and endosomal membrane. In its internal conformation the protein plays a role in virion morphogenesis and mediates the contact with the nucleocapsid like a matrix protein. The middle envelope protein plays an important role in the budding of the virion. It is involved in the induction of budding in a nucleocapsid independent way. In this process the majority of envelope proteins bud to form subviral lipoprotein particles of 22 nm of diameter that do not contain a nucleocapsid. This chain is Large envelope protein, found in Homo sapiens (Human).